A 225-amino-acid polypeptide reads, in one-letter code: Chlorosome protein J (225 aa).

One can recognise a 2Fe-2S ferredoxin-type domain in the interval 1 to 95 (MIIYINDKPC…TIRVLTRAEK (95 aa)). [2Fe-2S] cluster-binding residues include Cys-33, Cys-39, Cys-42, and Cys-77.

The cofactor is [2Fe-2S] cluster.

Its subcellular location is the chlorosome. Its function is as follows. Could play a direct role in the oxidation or reduction of the quenching species formed in the chlorosome. The polypeptide is Chlorosome protein J (csmJ) (Chlorobaculum tepidum (strain ATCC 49652 / DSM 12025 / NBRC 103806 / TLS) (Chlorobium tepidum)).